Reading from the N-terminus, the 334-residue chain is MPTMGNKNSMCGLKRFPNYKKSPIGSFAKNSSSHDGIKTIEAVNSCSFSRKADLCIRIITWNMNGNVSYEDLVELVGKERKFDLLVVGLQEAPKANVDQLLQTASSPTHELLGKAKLQSVQLYLFGPKNSHTLVKELKAERYSVGGCGGLIGRKKGAVAIRINYDDIKMVFISCHLSAHAKKVDQRNTELRHIANSLLPRDKRKRDLTVWLGDLNYRIQDVSNHPVRSLIQNHLQSVLVSKDQLLQEAERGEIFKGYSEGTLGFKPTYKYNVGSSDYDTSHKIRVPAWTDRILFKIQDTDNIQATLHSYDSIDQVYGSDHKPVKADLCLKWVNS.

Catalytic stretches follow at residues 206-222 (DLTV…QDVS) and 282-297 (KIRV…FKIQ).

This sequence belongs to the inositol polyphosphate 5-phosphatase family. Expressed ubiquitously.

It is found in the cell membrane. The catalysed reaction is a 1,2-diacyl-sn-glycero-3-phospho-(1D-myo-inositol-4,5-bisphosphate) + H2O = a 1,2-diacyl-sn-glycero-3-phospho-(1D-myo-inositol 4-phosphate) + phosphate. It carries out the reaction a 1,2-diacyl-sn-glycero-3-phospho-(1D-myo-inositol-3,4,5-trisphosphate) + H2O = a 1,2-diacyl-sn-glycero-3-phospho-(1D-myo-inositol-3,4-bisphosphate) + phosphate. In terms of biological role, has phosphatase activity toward PtdIns(4,5)P2, and in vitro toward PtdIns(3,5)P2 and PtdIns(3,4,5)P3. Cannot dephosphorylate PtdIns(5)P, Ins(1,4,5)P3 and Ins(1,3,4,5)P4. This chain is Type IV inositol polyphosphate 5-phosphatase 11, found in Arabidopsis thaliana (Mouse-ear cress).